The primary structure comprises 1088 residues: RNA-directed RNA polymerase (1088 aa).

The RdRp catalytic domain occupies 501–687 (LSYGDVTRFL…AKRYIAGGKI (187 aa)).

It belongs to the reoviridae RNA-directed RNA polymerase family. As to quaternary structure, interacts with VP3 (Potential). Interacts with VP2; this interaction activates VP1. Interacts with NSP5; this interaction is probably necessary for the formation of functional virus factories. Interacts with NSP2; this interaction is weak. Mg(2+) is required as a cofactor.

It localises to the virion. The catalysed reaction is RNA(n) + a ribonucleoside 5'-triphosphate = RNA(n+1) + diphosphate. Its function is as follows. RNA-directed RNA polymerase that is involved in both transcription and genome replication. Together with VP3 capping enzyme, forms an enzyme complex positioned near the channels situated at each of the five-fold vertices of the core. Following infection, the outermost layer of the virus is lost, leaving a double-layered particle (DLP) made up of the core and VP6 shell. VP1 then catalyzes the transcription of fully conservative plus-strand genomic RNAs that are extruded through the DLP's channels into the cytoplasm where they function as mRNAs for translation of viral proteins. One copy of each of the viral (+)RNAs is also recruited during core assembly, together with newly synthesized polymerase complexes and VP2. The polymerase of these novo-formed particles catalyzes the synthesis of complementary minus-strands leading to dsRNA formation. To do so, the polymerase specifically recognizes and binds 4 bases 5'-UGUG-3' in the conserved 3'-sequence of plus-strand RNA templates. VP2 presumably activates the autoinhibited VP1-RNA complex to coordinate packaging and genome replication. Once dsRNA synthesis is complete, the polymerase switches to the transcriptional mode, thus providing secondary transcription. This chain is RNA-directed RNA polymerase, found in Macaca mulatta (Rhesus macaque).